The primary structure comprises 89 residues: Small ribosomal subunit protein uS19 (89 aa).

This sequence belongs to the universal ribosomal protein uS19 family.

Protein S19 forms a complex with S13 that binds strongly to the 16S ribosomal RNA. This Phocaeicola vulgatus (strain ATCC 8482 / DSM 1447 / JCM 5826 / CCUG 4940 / NBRC 14291 / NCTC 11154) (Bacteroides vulgatus) protein is Small ribosomal subunit protein uS19.